We begin with the raw amino-acid sequence, 391 residues long: Phosphoglycerate kinase (391 aa).

Substrate contacts are provided by residues 21–23 (DLN), R36, 59–62 (HLGR), R113, and R146. ATP-binding positions include K197, E319, and 345 to 348 (GGDT).

This sequence belongs to the phosphoglycerate kinase family. In terms of assembly, monomer.

The protein resides in the cytoplasm. The catalysed reaction is (2R)-3-phosphoglycerate + ATP = (2R)-3-phospho-glyceroyl phosphate + ADP. It participates in carbohydrate degradation; glycolysis; pyruvate from D-glyceraldehyde 3-phosphate: step 2/5. The sequence is that of Phosphoglycerate kinase from Shewanella halifaxensis (strain HAW-EB4).